A 178-amino-acid chain; its full sequence is ATP-dependent protease subunit HslV (178 aa).

Threonine 7 is an active-site residue. 3 residues coordinate Na(+): glycine 162, cysteine 165, and threonine 168.

Belongs to the peptidase T1B family. HslV subfamily. In terms of assembly, a double ring-shaped homohexamer of HslV is capped on each side by a ring-shaped HslU homohexamer. The assembly of the HslU/HslV complex is dependent on binding of ATP.

It is found in the cytoplasm. The enzyme catalyses ATP-dependent cleavage of peptide bonds with broad specificity.. Its activity is regulated as follows. Allosterically activated by HslU binding. In terms of biological role, protease subunit of a proteasome-like degradation complex believed to be a general protein degrading machinery. In Cupriavidus pinatubonensis (strain JMP 134 / LMG 1197) (Cupriavidus necator (strain JMP 134)), this protein is ATP-dependent protease subunit HslV.